The chain runs to 431 residues: Bone morphogenetic protein 7 (431 aa).

A signal peptide spans 1-29 (MHVRSLRAAAPHSFVALWAPLFLLRSALA). A propeptide spanning residues 30–292 (DFSLDNEVHS…ATEVHFRSIR (263 aa)) is cleaved from the precursor. N-linked (GlcNAc...) asparagine glycans are attached at residues Asn-187, Asn-302, Asn-321, and Asn-372. The interval 291 to 311 (IRSTGSKQRSQNRSKTPKNQE) is disordered. 3 cysteine pairs are disulfide-bonded: Cys-330-Cys-396, Cys-359-Cys-428, and Cys-363-Cys-430.

Belongs to the TGF-beta family. As to quaternary structure, homodimer; disulfide-linked. Interacts with SOSTDC1. Interacts with TWSG1. Interacts with FBN1 (via N-terminal domain) and FBN2. Interacts with type I receptor ACVR1. Interacts with type II receptor ACVR2A. Interacts with NOG; this interaction inhibits canonical BMP signaling. Interacts with SCUBE3. Interacts with ERFE; the interaction inhibits BMP-induced transcription of HAMP. Interacts with TGFBR3. In terms of processing, several N-termini starting at positions 293, 300, 315 and 316 have been identified by direct sequencing resulting in secretion of different mature forms. As to expression, expressed in the kidney and bladder. Lower levels seen in the brain.

Its subcellular location is the secreted. Growth factor of the TGF-beta superfamily that plays important role in various biological processes, including embryogenesis, hematopoiesis, neurogenesis and skeletal morphogenesis. Initiates the canonical BMP signaling cascade by associating with type I receptor ACVR1 and type II receptor ACVR2A. Once all three components are bound together in a complex at the cell surface, ACVR2A phosphorylates and activates ACVR1. In turn, ACVR1 propagates signal by phosphorylating SMAD1/5/8 that travel to the nucleus and act as activators and repressors of transcription of target genes. For specific functions such as growth cone collapse in developing spinal neurons and chemotaxis of monocytes, also uses BMPR2 as type II receptor. Can also signal through non-canonical pathways such as P38 MAP kinase signaling cascade that promotes brown adipocyte differentiation through activation of target genes, including members of the SOX family of transcription factors. Promotes the expression of HAMP, this is repressed by its interaction with ERFE. The protein is Bone morphogenetic protein 7 (BMP7) of Homo sapiens (Human).